A 631-amino-acid chain; its full sequence is tRNA uridine 5-carboxymethylaminomethyl modification enzyme MnmG (631 aa).

FAD is bound by residues 13–18, Val125, and Ser180; that span reads GGGHAG. Position 273-287 (273-287) interacts with NAD(+); it reads GPRYCPSIEDKVMRF. Position 370 (Gln370) interacts with FAD.

Belongs to the MnmG family. In terms of assembly, homodimer. Heterotetramer of two MnmE and two MnmG subunits. Requires FAD as cofactor.

It localises to the cytoplasm. Its function is as follows. NAD-binding protein involved in the addition of a carboxymethylaminomethyl (cmnm) group at the wobble position (U34) of certain tRNAs, forming tRNA-cmnm(5)s(2)U34. The chain is tRNA uridine 5-carboxymethylaminomethyl modification enzyme MnmG from Vibrio parahaemolyticus serotype O3:K6 (strain RIMD 2210633).